The primary structure comprises 447 residues: Probable asparagine--tRNA ligase, cytoplasmic (447 aa).

The protein belongs to the class-II aminoacyl-tRNA synthetase family.

The protein localises to the cytoplasm. The enzyme catalyses tRNA(Asn) + L-asparagine + ATP = L-asparaginyl-tRNA(Asn) + AMP + diphosphate + H(+). This chain is Probable asparagine--tRNA ligase, cytoplasmic, found in Vairimorpha ceranae (strain BRL01) (Microsporidian parasite).